Reading from the N-terminus, the 420-residue chain is Histidine--tRNA ligase (420 aa).

Belongs to the class-II aminoacyl-tRNA synthetase family. Homodimer.

It is found in the cytoplasm. The catalysed reaction is tRNA(His) + L-histidine + ATP = L-histidyl-tRNA(His) + AMP + diphosphate + H(+). This is Histidine--tRNA ligase from Mycobacterium marinum (strain ATCC BAA-535 / M).